Here is a 192-residue protein sequence, read N- to C-terminus: NAD(P)H-quinone oxidoreductase subunit J, organellar chromatophore (192 aa).

Belongs to the complex I 30 kDa subunit family. NDH is composed of at least 16 different subunits, 5 of which are encoded in the nucleus.

The protein localises to the plastid. It localises to the organellar chromatophore thylakoid membrane. It catalyses the reaction a quinone + NADH + H(+) = a quinol + NAD(+). Functionally, NDH-1 shuttles electrons from NADH, via FMN and iron-sulfur (Fe-S) centers, to quinones in the respiratory chain. Couples the redox reaction to proton translocation (for every two electrons transferred, four hydrogen ions are translocated across the cytoplasmic membrane), and thus conserves the redox energy in a proton gradient. The sequence is that of NAD(P)H-quinone oxidoreductase subunit J, organellar chromatophore from Paulinella chromatophora.